Consider the following 780-residue polypeptide: ATP-dependent 6-phosphofructokinase, muscle type (780 aa).

T2 carries the post-translational modification N-acetylthreonine. Residues 2–390 (THEEHHAAKT…NWEVYKLLAH (389 aa)) form an N-terminal catalytic PFK domain 1 region. ATP is bound by residues G25, 88–89 (RC), and 118–121 (GDGS). Residue D119 participates in Mg(2+) binding. Residue S133 is modified to Phosphoserine. Residues 164–166 (SID), R201, 208–210 (MGR), E264, R292, and 298–301 (HVQR) contribute to the substrate site. Residue D166 is the Proton acceptor of the active site. S377 is subject to Phosphoserine. The segment at 391-401 (VRPPVSKSGSH) is interdomain linker. The segment at 402–780 (TVAVMNVGAP…TRKRSGEAAV (379 aa)) is C-terminal regulatory PFK domain 2. Residues R471 and 528–532 (TVSNN) contribute to the beta-D-fructose 2,6-bisphosphate site. An O-linked (GlcNAc) serine glycan is attached at S530. Position 557 is an N6-(2-hydroxyisobutyryl)lysine (K557). Residues R566, 573-575 (MGG), E629, R655, and 661-664 (HMQQ) contribute to the beta-D-fructose 2,6-bisphosphate site. S667 carries the phosphoserine modification. Residue R735 coordinates beta-D-fructose 2,6-bisphosphate. Position 775 is a phosphoserine (S775).

Belongs to the phosphofructokinase type A (PFKA) family. ATP-dependent PFK group I subfamily. Eukaryotic two domain clade 'E' sub-subfamily. Homo- and heterotetramers. Phosphofructokinase (PFK) enzyme functions as a tetramer composed of different combinations of 3 types of subunits, called PFKM (where M stands for Muscle), PFKL (Liver) and PFKP (Platelet). The composition of the PFK tetramer differs according to the tissue type it is present in. In muscles, it is composed of 4 PFKM subunits (also called M4). In the liver, the predominant form is a tetramer of PFKL subunits (L4). In erythrocytes, both PFKM and PFKL subunits randomly tetramerize to form M4, L4 and other combinations (ML3, M2L2, M3L). The kinetic and regulatory properties of the tetrameric enzyme are dependent on the subunit composition, hence can vary across tissues. Interacts (via C-terminus) with HK1 (via N-terminal spermatogenic cell-specific region). Mg(2+) serves as cofactor. Post-translationally, glcNAcylation decreases enzyme activity.

The protein localises to the cytoplasm. It carries out the reaction beta-D-fructose 6-phosphate + ATP = beta-D-fructose 1,6-bisphosphate + ADP + H(+). The protein operates within carbohydrate degradation; glycolysis; D-glyceraldehyde 3-phosphate and glycerone phosphate from D-glucose: step 3/4. Its activity is regulated as follows. Allosterically activated by ADP, AMP, or fructose 2,6-bisphosphate, and allosterically inhibited by ATP or citrate. Catalyzes the phosphorylation of D-fructose 6-phosphate to fructose 1,6-bisphosphate by ATP, the first committing step of glycolysis. The sequence is that of ATP-dependent 6-phosphofructokinase, muscle type (PFKM) from Homo sapiens (Human).